A 185-amino-acid polypeptide reads, in one-letter code: Ribosome-recycling factor (185 aa).

The protein belongs to the RRF family.

It localises to the cytoplasm. Responsible for the release of ribosomes from messenger RNA at the termination of protein biosynthesis. May increase the efficiency of translation by recycling ribosomes from one round of translation to another. The sequence is that of Ribosome-recycling factor from Marinomonas sp. (strain MWYL1).